The following is a 422-amino-acid chain: Serine hydroxymethyltransferase (422 aa).

(6S)-5,6,7,8-tetrahydrofolate-binding positions include L119 and 123-125 (GHL). K228 is modified (N6-(pyridoxal phosphate)lysine). (6S)-5,6,7,8-tetrahydrofolate contacts are provided by residues E244 and 352-354 (SPF).

The protein belongs to the SHMT family. In terms of assembly, homodimer. Pyridoxal 5'-phosphate is required as a cofactor.

The protein resides in the cytoplasm. The enzyme catalyses (6R)-5,10-methylene-5,6,7,8-tetrahydrofolate + glycine + H2O = (6S)-5,6,7,8-tetrahydrofolate + L-serine. It participates in one-carbon metabolism; tetrahydrofolate interconversion. Its pathway is amino-acid biosynthesis; glycine biosynthesis; glycine from L-serine: step 1/1. In terms of biological role, catalyzes the reversible interconversion of serine and glycine with tetrahydrofolate (THF) serving as the one-carbon carrier. This reaction serves as the major source of one-carbon groups required for the biosynthesis of purines, thymidylate, methionine, and other important biomolecules. Also exhibits THF-independent aldolase activity toward beta-hydroxyamino acids, producing glycine and aldehydes, via a retro-aldol mechanism. The polypeptide is Serine hydroxymethyltransferase (Magnetococcus marinus (strain ATCC BAA-1437 / JCM 17883 / MC-1)).